An 897-amino-acid chain; its full sequence is Putative POM121-like protein 1-like (897 aa).

Over residues 1–19 (MPEQDKDPRVQENPDDQRT) the composition is skewed to basic and acidic residues. Disordered regions lie at residues 1-177 (MPEQ…LPPP), 211-252 (IPDC…PKSQ), 266-302 (EVPS…RDTA), 315-348 (ASRD…GSLL), 362-469 (ATAA…ASRP), 484-522 (DCRP…RPKS), 536-612 (AEVP…LPPS), 642-741 (AQRS…ASRP), 753-793 (AISD…DRPK), and 812-856 (STAP…APFT). The segment covering 54-65 (LHAQSSEIRYNH) has biased composition (polar residues). The span at 66–76 (TSQTSWTSSST) shows a compositional bias: low complexity. 3 stretches are compositionally biased toward polar residues: residues 77-89 (KRNA…SSTG), 103-114 (SRCQLTLSYSKT), and 219-228 (PSHTLSSLAT). 4 stretches are compositionally biased toward polar residues: residues 376-385 (NQRSQTSRTR), 417-430 (SHCQ…NTVS), 490-499 (PSHTLSSLAT), and 556-579 (FSSS…TSLI). Low complexity predominate over residues 599–612 (TSAPAAAAAALPPS). 4 stretches are compositionally biased toward polar residues: residues 650-676 (NQRS…STEG), 689-702 (SHCQ…NTVS), 762-771 (PSHTLSSLAT), and 828-849 (FSSS…QDTS). The chain crosses the membrane as a helical span at residues 877-897 (LGLFLLVFSFFFLLTWASFSF).

The protein belongs to the POM121 family.

The protein resides in the membrane. The polypeptide is Putative POM121-like protein 1-like (Homo sapiens (Human)).